The primary structure comprises 233 residues: tRNA (guanine-N(7)-)-methyltransferase (233 aa).

The interval 1-23 (MSPQDRPSRTTEAFFGRRRGKPV) is disordered. S-adenosyl-L-methionine is bound by residues Glu64, Glu89, Asp116, and Asp138. The active site involves Asp138. Substrate-binding positions include Lys142, Asp174, and 212–215 (TRYE).

The protein belongs to the class I-like SAM-binding methyltransferase superfamily. TrmB family.

The catalysed reaction is guanosine(46) in tRNA + S-adenosyl-L-methionine = N(7)-methylguanosine(46) in tRNA + S-adenosyl-L-homocysteine. It participates in tRNA modification; N(7)-methylguanine-tRNA biosynthesis. Its function is as follows. Catalyzes the formation of N(7)-methylguanine at position 46 (m7G46) in tRNA. In Mesorhizobium japonicum (strain LMG 29417 / CECT 9101 / MAFF 303099) (Mesorhizobium loti (strain MAFF 303099)), this protein is tRNA (guanine-N(7)-)-methyltransferase.